Reading from the N-terminus, the 510-residue chain is Lysine--tRNA ligase (510 aa).

Residues glutamate 420 and glutamate 427 each contribute to the Mg(2+) site.

The protein belongs to the class-II aminoacyl-tRNA synthetase family. In terms of assembly, homodimer. The cofactor is Mg(2+).

The protein resides in the cytoplasm. The enzyme catalyses tRNA(Lys) + L-lysine + ATP = L-lysyl-tRNA(Lys) + AMP + diphosphate. The chain is Lysine--tRNA ligase from Vibrio vulnificus (strain CMCP6).